We begin with the raw amino-acid sequence, 178 residues long: Putative metal-dependent hydrolase GK0616 (178 aa).

Positions 68, 161, and 165 each coordinate Zn(2+).

This sequence belongs to the metal hydrolase YfiT family. In terms of assembly, homodimer. Zn(2+) serves as cofactor.

The protein localises to the cytoplasm. Functionally, possible metal-dependent hydrolase. This is Putative metal-dependent hydrolase GK0616 from Geobacillus kaustophilus (strain HTA426).